We begin with the raw amino-acid sequence, 287 residues long: ATP synthase gamma chain (287 aa).

Belongs to the ATPase gamma chain family. As to quaternary structure, F-type ATPases have 2 components, CF(1) - the catalytic core - and CF(0) - the membrane proton channel. CF(1) has five subunits: alpha(3), beta(3), gamma(1), delta(1), epsilon(1). CF(0) has three main subunits: a, b and c.

The protein resides in the cell inner membrane. Its function is as follows. Produces ATP from ADP in the presence of a proton gradient across the membrane. The gamma chain is believed to be important in regulating ATPase activity and the flow of protons through the CF(0) complex. The protein is ATP synthase gamma chain of Salmonella agona (strain SL483).